The primary structure comprises 291 residues: 4-diphosphocytidyl-2-C-methyl-D-erythritol kinase (291 aa).

Residue Lys11 is part of the active site. 94–104 (PAGSGLGGGSA) contributes to the ATP binding site. Asp136 is an active-site residue.

This sequence belongs to the GHMP kinase family. IspE subfamily.

It catalyses the reaction 4-CDP-2-C-methyl-D-erythritol + ATP = 4-CDP-2-C-methyl-D-erythritol 2-phosphate + ADP + H(+). It functions in the pathway isoprenoid biosynthesis; isopentenyl diphosphate biosynthesis via DXP pathway; isopentenyl diphosphate from 1-deoxy-D-xylulose 5-phosphate: step 3/6. Its function is as follows. Catalyzes the phosphorylation of the position 2 hydroxy group of 4-diphosphocytidyl-2C-methyl-D-erythritol. This is 4-diphosphocytidyl-2-C-methyl-D-erythritol kinase from Treponema pallidum (strain Nichols).